The chain runs to 198 residues: Protein GrpE (198 aa).

Residues Met1–Glu32 are disordered.

The protein belongs to the GrpE family. In terms of assembly, homodimer.

The protein localises to the cytoplasm. Participates actively in the response to hyperosmotic and heat shock by preventing the aggregation of stress-denatured proteins, in association with DnaK and GrpE. It is the nucleotide exchange factor for DnaK and may function as a thermosensor. Unfolded proteins bind initially to DnaJ; upon interaction with the DnaJ-bound protein, DnaK hydrolyzes its bound ATP, resulting in the formation of a stable complex. GrpE releases ADP from DnaK; ATP binding to DnaK triggers the release of the substrate protein, thus completing the reaction cycle. Several rounds of ATP-dependent interactions between DnaJ, DnaK and GrpE are required for fully efficient folding. The sequence is that of Protein GrpE from Haemophilus ducreyi (strain 35000HP / ATCC 700724).